Reading from the N-terminus, the 491-residue chain is Glutamyl-tRNA(Gln) amidotransferase subunit A (491 aa).

Catalysis depends on charge relay system residues K78 and S158. S182 functions as the Acyl-ester intermediate in the catalytic mechanism.

The protein belongs to the amidase family. GatA subfamily. Heterotrimer of A, B and C subunits.

It catalyses the reaction L-glutamyl-tRNA(Gln) + L-glutamine + ATP + H2O = L-glutaminyl-tRNA(Gln) + L-glutamate + ADP + phosphate + H(+). Its function is as follows. Allows the formation of correctly charged Gln-tRNA(Gln) through the transamidation of misacylated Glu-tRNA(Gln) in organisms which lack glutaminyl-tRNA synthetase. The reaction takes place in the presence of glutamine and ATP through an activated gamma-phospho-Glu-tRNA(Gln). The chain is Glutamyl-tRNA(Gln) amidotransferase subunit A from Bradyrhizobium sp. (strain BTAi1 / ATCC BAA-1182).